Reading from the N-terminus, the 258-residue chain is Imidazole glycerol phosphate synthase subunit HisF (258 aa).

Active-site residues include Asp12 and Asp131.

This sequence belongs to the HisA/HisF family. As to quaternary structure, heterodimer of HisH and HisF.

The protein resides in the cytoplasm. It catalyses the reaction 5-[(5-phospho-1-deoxy-D-ribulos-1-ylimino)methylamino]-1-(5-phospho-beta-D-ribosyl)imidazole-4-carboxamide + L-glutamine = D-erythro-1-(imidazol-4-yl)glycerol 3-phosphate + 5-amino-1-(5-phospho-beta-D-ribosyl)imidazole-4-carboxamide + L-glutamate + H(+). It participates in amino-acid biosynthesis; L-histidine biosynthesis; L-histidine from 5-phospho-alpha-D-ribose 1-diphosphate: step 5/9. IGPS catalyzes the conversion of PRFAR and glutamine to IGP, AICAR and glutamate. The HisF subunit catalyzes the cyclization activity that produces IGP and AICAR from PRFAR using the ammonia provided by the HisH subunit. The polypeptide is Imidazole glycerol phosphate synthase subunit HisF (Sinorhizobium medicae (strain WSM419) (Ensifer medicae)).